A 505-amino-acid chain; its full sequence is 2,3-bisphosphoglycerate-independent phosphoglycerate mutase (505 aa).

Residues Asp-13 and Ser-63 each coordinate Mn(2+). Ser-63 functions as the Phosphoserine intermediate in the catalytic mechanism. Residues His-124, 153–154 (RD), Arg-183, Arg-189, 254–257 (RADR), and Lys-329 each bind substrate. Positions 395, 399, 436, 437, and 455 each coordinate Mn(2+).

This sequence belongs to the BPG-independent phosphoglycerate mutase family. Monomer. Mn(2+) is required as a cofactor.

The catalysed reaction is (2R)-2-phosphoglycerate = (2R)-3-phosphoglycerate. The protein operates within carbohydrate degradation; glycolysis; pyruvate from D-glyceraldehyde 3-phosphate: step 3/5. In terms of biological role, catalyzes the interconversion of 2-phosphoglycerate and 3-phosphoglycerate. In Agrobacterium fabrum (strain C58 / ATCC 33970) (Agrobacterium tumefaciens (strain C58)), this protein is 2,3-bisphosphoglycerate-independent phosphoglycerate mutase.